Consider the following 1659-residue polypeptide: eIF-2-alpha kinase GCN2 (1659 aa).

Positions asparagine 17–phenylalanine 128 constitute an RWD domain. Residues lysine 149 to glutamate 170 form a disordered region. 2 Protein kinase domains span residues leucine 256 to leucine 527 and phenylalanine 599 to leucine 981. ATP is bound by residues leucine 605–valine 613 and lysine 628. Disordered stretches follow at residues asparagine 671–glutamate 691 and phenylalanine 727–arginine 768. Position 761 is a phosphoserine (serine 761). Aspartate 835 serves as the catalytic Proton acceptor. A phosphothreonine; by autocatalysis mark is found at threonine 882 and threonine 887. A histidyl-tRNA synthetase-like region spans residues asparagine 999–serine 1519.

This sequence belongs to the protein kinase superfamily. Ser/Thr protein kinase family. GCN2 subfamily. Homodimer; homodimerization is important for kinase activation by uncharged tRNAs. Interacts (via N-terminal RWD domain) with GCN1 (via N- and C-terminus); this interaction stimulates GCN2 kinase activity in a GCN20-dependent manner in response to amino acid starvation. Interacts (via N-terminus) with the GCN1-GCN20 complex on translating ribosomes in amino acid-starved cells; GCN1 may bind near the ribosomal A-site and promotes the transfer of uncharged tRNAs from the A-site to the tRNA-binding domain in GCN2 for its subsequent kinase activation, and hence allowing GCN4 translational activation and derepression of amino acid biosynthetic genes. Interacts (via C-terminus) with TIF11; this interaction is direct, occurs in amino acid-repleted cells, may be stabilized in a ribosome-dependent manner, reduces GCN2-mediated eIF-2-alpha phosphorylation but not GCN2 autophosphorylation and is lost in amino acid-starved cells and by uncharged tRNAs. Associates (via C-terminus) with ribosomes. The cofactor is Mg(2+). In terms of processing, autophosphorylated, autophosphorylation on Thr-882 and Thr-887 increases kinase activity.

The protein resides in the cytoplasm. The enzyme catalyses L-seryl-[protein] + ATP = O-phospho-L-seryl-[protein] + ADP + H(+). It carries out the reaction L-threonyl-[protein] + ATP = O-phospho-L-threonyl-[protein] + ADP + H(+). With respect to regulation, the integrated stress response (ISR) is activated in response to conditions that promote ribosome collisions: GCN1, which acts as a ribosome collision sensor, activates GCN2. The RQC pathway and the integrated stress response (ISR) antagonize each other: HEL2 prevents the activation of GCN2, while GCN2 suppresses RQC activation. Ribosome stalling-induced integrated stress response prefers ribosomes with empty A sites. The kinase activity is stimulated upon binding to uncharged tRNAs. Metabolic-stress sensing protein kinase that phosphorylates the alpha subunit of eukaryotic translation initiation factor 2 (eIF-2-alpha/SUI2) on 'Ser-52' in response to low amino acid, carbon, or purine availability. Required for adapatation to nutrient starvation by acting as a key component of the integrated stress response (ISR), by which cells alter their translational and transcriptional output in response to starvation. Converts phosphorylated eIF-2-alpha/SUI2 either to a competitive inhibitor of translation initiation factor eIF-2B, leading to a global protein synthesis repression, and thus to a reduced overall utilization of amino acids, or to a translational initiation activation of specific mRNAs, such as the transcriptional activator GCN4, and hence allowing GCN4-mediated reprogramming of transcription to alleviate nutrient depletion. Binds uncharged tRNAs. Binds to aminoacylated tRNA(Phe) less tightly than to deacylated tRNA(Phe). Binds to double-stranded RNA. This is eIF-2-alpha kinase GCN2 from Saccharomyces cerevisiae (strain ATCC 204508 / S288c) (Baker's yeast).